Consider the following 933-residue polypeptide: Serine/threonine-protein kinase PknD (933 aa).

A Protein kinase domain is found at 4–291 (YDIIRMIGKG…ALKADIEQHL (288 aa)). ATP contacts are provided by residues 10–18 (IGKGGMGEV) and Lys-33. Asp-138 serves as the catalytic Proton acceptor.

This sequence belongs to the protein kinase superfamily. Ser/Thr protein kinase family. Post-translationally, autophosphorylated on serine and threonine residues.

It carries out the reaction L-seryl-[protein] + ATP = O-phospho-L-seryl-[protein] + ADP + H(+). It catalyses the reaction L-threonyl-[protein] + ATP = O-phospho-L-threonyl-[protein] + ADP + H(+). In terms of biological role, together with the serine/threonine kinase Pkn1, may play a role in the specific interactions with host proteins during intracellular growth. The polypeptide is Serine/threonine-protein kinase PknD (Chlamydia abortus (strain DSM 27085 / S26/3) (Chlamydophila abortus)).